Consider the following 444-residue polypeptide: Shufflon protein B' (444 aa).

Residues 1–361 (MKKYDRGWAS…TGAILSCQSG (361 aa)) are constant region. Positions 362 to 444 (TWRKVGSGEL…GSITVYAICQ (83 aa)) are variable region.

The sequence is that of Shufflon protein B' from Escherichia coli.